The following is a 369-amino-acid chain: D-glucosaminate-6-phosphate ammonia lyase (369 aa).

The residue at position 213 (lysine 213) is an N6-(pyridoxal phosphate)lysine.

Belongs to the SelA family. Pyridoxal 5'-phosphate is required as a cofactor.

It catalyses the reaction 2-amino-2-deoxy-D-gluconate 6-phosphate = 2-dehydro-3-deoxy-6-phospho-D-gluconate + NH4(+). Functionally, involved in the catabolism of D-glucosaminate. Catalyzes the conversion of D-glucosaminate 6-phosphate to yield keto-3-deoxygluconate 6-phosphate (KDGP). This Salmonella typhimurium (strain 14028s / SGSC 2262) protein is D-glucosaminate-6-phosphate ammonia lyase.